Reading from the N-terminus, the 273-residue chain is Protein B4 (273 aa).

Residues 1-24 (MAPKKAVAAPEGGNKENAAVKGSS) form a disordered region. In terms of domain architecture, H15 spans 40–118 (SHPPTLSMVV…GATGRFKLAK (79 aa)). Residues 120 to 273 (VKTTKAGKEN…AGKKGKKVTN (154 aa)) are disordered. Residues 154–256 (AKTEKEPKGE…KDVKAQKDST (103 aa)) are compositionally biased toward basic and acidic residues. A run of 3 repeats spans residues 189–198 (KEAKEVDKAN), 199–208 (KEAKEVDKAN), and 209–217 (KEAKEVDKA). Residues 189 to 217 (KEAKEVDKANKEAKEVDKANKEAKEVDKA) are 3 X 10 AA tandem repeats. The span at 264–273 (AGKKGKKVTN) shows a compositional bias: basic residues.

Belongs to the histone H1/H5 family. In terms of assembly, interacts with nap1l1.

The protein localises to the nucleus. It is found in the chromosome. The chain is Protein B4 (b4) from Xenopus laevis (African clawed frog).